The sequence spans 69 residues: UPF0337 protein DIP1660 (69 aa).

2 stretches are compositionally biased toward basic and acidic residues: residues M1–V19 and D30–V41. Positions M1 to K42 are disordered.

Belongs to the UPF0337 (CsbD) family.

The polypeptide is UPF0337 protein DIP1660 (Corynebacterium diphtheriae (strain ATCC 700971 / NCTC 13129 / Biotype gravis)).